Consider the following 260-residue polypeptide: Phosphate import ATP-binding protein PstB (260 aa).

The 242-residue stretch at 14-255 (IETENLNLFY…PKNTKTEEYI (242 aa)) folds into the ABC transporter domain. An ATP-binding site is contributed by 46 to 53 (GPSGCGKS).

It belongs to the ABC transporter superfamily. Phosphate importer (TC 3.A.1.7) family. The complex is composed of two ATP-binding proteins (PstB), two transmembrane proteins (PstC and PstA) and a solute-binding protein (PstS).

It localises to the cell inner membrane. The enzyme catalyses phosphate(out) + ATP + H2O = ADP + 2 phosphate(in) + H(+). Part of the ABC transporter complex PstSACB involved in phosphate import. Responsible for energy coupling to the transport system. The polypeptide is Phosphate import ATP-binding protein PstB (Borreliella afzelii (strain PKo) (Borrelia afzelii)).